We begin with the raw amino-acid sequence, 153 residues long: Probable histone H2A.4 (153 aa).

Positions 1–12 (MDSGTKVKKGAA) are enriched in basic residues. 2 disordered regions span residues 1-30 (MDSG…RSVK) and 129-153 (KSEK…PKKS). Residues 133–147 (AASTTKTPKSPSKAT) are compositionally biased toward low complexity. Positions 149 to 152 (SPKK) match the SPKK motif motif.

Belongs to the histone H2A family. As to quaternary structure, the nucleosome is a histone octamer containing two molecules each of H2A, H2B, H3 and H4 assembled in one H3-H4 heterotetramer and two H2A-H2B heterodimers. The octamer wraps approximately 147 bp of DNA. Post-translationally, not ubiquitinated.

Its subcellular location is the nucleus. It is found in the chromosome. Functionally, core component of nucleosome. Nucleosomes wrap and compact DNA into chromatin, limiting DNA accessibility to the cellular machineries which require DNA as a template. Histones thereby play a central role in transcription regulation, DNA repair, DNA replication and chromosomal stability. DNA accessibility is regulated via a complex set of post-translational modifications of histones, also called histone code, and nucleosome remodeling. The sequence is that of Probable histone H2A.4 from Arabidopsis thaliana (Mouse-ear cress).